Reading from the N-terminus, the 137-residue chain is Large ribosomal subunit protein uL16c (137 aa).

This sequence belongs to the universal ribosomal protein uL16 family. As to quaternary structure, part of the 50S ribosomal subunit.

It is found in the plastid. The polypeptide is Large ribosomal subunit protein uL16c (rpl16) (Helicosporidium sp. subsp. Simulium jonesii (Green alga)).